The primary structure comprises 537 residues: MAESLKKLAKSESLQALQDKVTYWVNDYNSNSCDQNLNYCIELIEQVAKVQAQLFGILTVTAQEGGNNEGVETIKCRLLPLLQTSFSSVNMGKTAESEMCATQDFQLRSKNRDNSPDQDQHQSDNESFSETQPTQVQDDLAESGKSLEGAKNGSTISLLAAEEEINQLKKQLKSLQAQEDARHKTSENRRSEALKSDHRSTKRTQDQRPQDVVSNYEKHLQNLKEEIAVLSAEKSGLQGRSARSPSPSTGTRSHRRGRSRSHSRSRSHSRSNSPCTTVAKIRSPSPNRAKMSSVARKAALLSRFSDAYSQARLDAQCLLRRCIDRAETVQRIIYIATVEAFHVAKMAFRHFKIRVRKMLTPSNVGSNTDFETAVSEYIVCHLDLYDSQSSVNDVIRAMNVNPKISFPPEVDFCLLTDFIQEICCIAFAMQSLEPPLDIAFGADGEIFNDCKYRRSYDSDFTAPLVFYHVWPALMENDCVIMKGEAVTKRGAFWSSVRPVMRCRSRSLSPICPRNHFGISTVSRSRSPSPIRCTFARY.

Positions 1-270 (MAESLKKLAK…SHSRSRSHSR (270 aa)) are interaction with YWHAG/14-3-3 protein gamma. 6 positions are modified to phosphoserine: S13, S85, S123, S127, S154, and S157. Residues 109 to 150 (SKNRDNSPDQDQHQSDNESFSETQPTQVQDDLAESGKSLEGA) are disordered. The span at 110-124 (KNRDNSPDQDQHQSD) shows a compositional bias: basic and acidic residues. Over residues 125-137 (NESFSETQPTQVQ) the composition is skewed to polar residues. Coiled-coil stretches lie at residues 152 to 184 (NGST…ARHK) and 210 to 243 (QDVV…RSAR). Disordered regions lie at residues 171–212 (QLKS…PQDV) and 233–291 (EKSG…RAKM). Residues 179-209 (EDARHKTSENRRSEALKSDHRSTKRTQDQRP) are compositionally biased toward basic and acidic residues. Residues 239-251 (GRSARSPSPSTGT) show a composition bias toward low complexity. Basic residues predominate over residues 252-269 (RSHRRGRSRSHSRSRSHS). Residues S283, S285, and S508 each carry the phosphoserine modification.

It belongs to the MIEAP family. Interacts (via coiled-coil domains) with BNIP3L (via BH3 domain). Interacts (via coiled-coil domains) with BNIP3 (via BH3 domain). Interacts with YWHAG/14-3-3 protein gamma; a protein that also plays a role in MALM. As to expression, in testis, expressed primarily in spermatids.

Its subcellular location is the cytoplasm. It localises to the cytosol. The protein resides in the mitochondrion outer membrane. It is found in the mitochondrion matrix. Key regulator of mitochondrial quality that mediates the repairing or degradation of unhealthy mitochondria in response to mitochondrial damage. Mediator of mitochondrial protein catabolic process (also named MALM) by mediating the degradation of damaged proteins inside mitochondria by promoting the accumulation in the mitochondrial matrix of hydrolases that are characteristic of the lysosomal lumen. Also involved in mitochondrion degradation of damaged mitochondria by promoting the formation of vacuole-like structures (named MIV), which engulf and degrade unhealthy mitochondria by accumulating lysosomes. The physical interaction of SPATA18/MIEAP, BNIP3 and BNIP3L/NIX at the mitochondrial outer membrane regulates the opening of a pore in the mitochondrial double membrane in order to mediate the translocation of lysosomal proteins from the cytoplasm to the mitochondrial matrix. Binds cardiolipin. May form molecular condensates (non-membrane-bounded organelles) within mitochondria that compartmentalize and promote cardiolipin metabolism. The sequence is that of Mitochondria-eating protein (Spata18) from Mus musculus (Mouse).